The following is an 858-amino-acid chain: Ubiquitin carboxyl-terminal hydrolase 13 (858 aa).

Position 112 is a phosphoserine (Ser-112). The UBP-type; degenerate zinc-finger motif lies at 185-293 (PVSKYANNLV…KHLAHFGIDM (109 aa)). 4 residues coordinate Zn(2+): Cys-209, Cys-212, Cys-229, and His-242. Residue Lys-309 forms a Glycyl lysine isopeptide (Lys-Gly) (interchain with G-Cter in SUMO2) linkage. In terms of domain architecture, USP spans 334–856 (TGLKNLGNSC…LGYMYFYRRI (523 aa)). Catalysis depends on Cys-343, which acts as the Nucleophile. Residue Lys-403 forms a Glycyl lysine isopeptide (Lys-Gly) (interchain with G-Cter in SUMO2) linkage. UBA domains are found at residues 650–691 (DIDE…IIVH) and 722–762 (QPPE…IFSH). His-818 acts as the Proton acceptor in catalysis.

This sequence belongs to the peptidase C19 family. As to quaternary structure, interacts with UFD1. Interacts (via UBA domains) with SIAH2 (when ubiquitinated). Interacts with BAG6; the interaction is direct and may mediate UBL4A deubiquitination. Interacts (via UBA 2 domain) with AMFR; the interaction is direct. Interacts with UBL4A; may be indirect via BAG6. Interacts with NEDD4.

Its subcellular location is the cytoplasm. The catalysed reaction is Thiol-dependent hydrolysis of ester, thioester, amide, peptide and isopeptide bonds formed by the C-terminal Gly of ubiquitin (a 76-residue protein attached to proteins as an intracellular targeting signal).. Specifically inhibited by spautin-1 (specific and potent autophagy inhibitor-1), a derivative of MBCQ that binds to USP13 and inhibits deubiquitinase activity. Regulated by PIK3C3/VPS34-containing complexes. The weak deubiquitinase activity in vitro suggests the existence of some mechanism that activates the enzyme. Functionally, deubiquitinase that mediates deubiquitination of target proteins such as BECN1, MITF, SKP2 and USP10 and is involved in various processes such as autophagy, endoplasmic reticulum-associated degradation (ERAD), cell cycle progression or DNA damage response. Component of a regulatory loop that controls autophagy and p53/TP53 levels: mediates deubiquitination of BECN1, a key regulator of autophagy, leading to stabilize the PIK3C3/VPS34-containing complexes. Alternatively, forms with NEDD4 a deubiquitination complex, which subsequently stabilizes VPS34 to promote autophagy. Also deubiquitinates USP10, an essential regulator of p53/TP53 stability. In turn, PIK3C3/VPS34-containing complexes regulate USP13 stability, suggesting the existence of a regulatory system by which PIK3C3/VPS34-containing complexes regulate p53/TP53 protein levels via USP10 and USP13. Recruited by nuclear UFD1 and mediates deubiquitination of SKP2, thereby regulating endoplasmic reticulum-associated degradation (ERAD). Also regulates ERAD through the deubiquitination of UBL4A a component of the BAG6/BAT3 complex. Mediates stabilization of SIAH2 independently of deubiquitinase activity: binds ubiquitinated SIAH2 and acts by impairing SIAH2 autoubiquitination. Regulates the cell cycle progression by stabilizing cell cycle proteins such as SKP2 and AURKB. In addition, plays an important role in maintaining genomic stability and in DNA replication checkpoint activation via regulation of RAP80 and TOPBP1. Deubiquitinates the multifunctional protein HMGB1 and subsequently drives its nucleocytoplasmic localization and its secretion. Positively regulates type I and type II interferon signalings by deubiquitinating STAT1 but negatively regulates antiviral response by deubiquitinating STING1. In Mus musculus (Mouse), this protein is Ubiquitin carboxyl-terminal hydrolase 13 (Usp13).